The following is a 1726-amino-acid chain: Transcription elongation factor SPT6 (1726 aa).

Acidic residues-rich tracts occupy residues 1-14 (MSDF…ESEE), 32-49 (EEED…DDQD), and 59-80 (NDDD…DSED). Residues 1–197 (MSDFVESEAE…DDGQPLKKPK (197 aa)) are disordered. Ser2 carries the N-acetylserine modification. Residues 2–485 (SDFVESEAEE…PKMQNAAKAS (484 aa)) are interaction with IWS1. An interaction with PAAF1 region spans residues 2 to 916 (SDFVESEAEE…PPVLRQAVSL (915 aa)). Positions 3-51 (DFVESEAEESEEEYNHEGEVVPRVTKKFVEEEDDDEEEEEENLDDQDER) form a coiled coil. A phosphoserine mark is found at Ser7 and Ser12. A phosphoserine mark is found at Ser73, Ser78, and Ser91. A compositionally biased stretch (acidic residues) spans 95–105 (RLEDDDFDLIE). The span at 111 to 122 (KVKRGQKYRRVK) shows a compositional bias: basic residues. A Phosphoserine modification is found at Ser125. Acidic residues-rich tracts occupy residues 126–136 (DDDEDDEEEYG), 150–160 (FQDEEGEEGQE), and 169–190 (PDEE…DDDG). A Phosphoserine modification is found at Ser267. Positions 317 to 1300 (ADWIYRNAFA…NEWKLPKDTY (984 aa)) are interaction with KDM6A. The disordered stretch occupies residues 489–520 (LKRIKEDGDEEGEGEEAEDEEQRGPELKQASR). The segment covering 495–509 (DGDEEGEGEEAEDEE) has biased composition (acidic residues). Basic and acidic residues predominate over residues 510–520 (QRGPELKQASR). N6-acetyllysine is present on Lys743. The 70-residue stretch at 1213-1282 (WNHFDSGSCP…EKFSADLTCR (70 aa)) folds into the S1 motif domain. The SH2 domain maps to 1325–1431 (YIKRVIAHPS…FARDLLNHKY (107 aa)). Tyr1515 is subject to Phosphotyrosine. Thr1523 is modified (phosphothreonine). The residue at position 1526 (Ser1526) is a Phosphoserine. Phosphothreonine occurs at positions 1530 and 1532. Phosphoserine is present on Ser1535. Position 1539 is a phosphothreonine (Thr1539). Residues 1633 to 1726 (PQYHQLQAST…ATPLLDEMDR (94 aa)) form an interaction with histone H2B and H3 region. Positions 1636–1726 (HQLQASTTPQ…ATPLLDEMDR (91 aa)) are disordered. Low complexity predominate over residues 1639-1664 (QASTTPQSTQAQPQPSSSSRQRQQQP). N6-acetyllysine is present on Lys1676. Position 1697 is a phosphothreonine (Thr1697). A phosphoserine mark is found at Ser1701 and Ser1703. Thr1709 and Thr1718 each carry phosphothreonine.

Belongs to the SPT6 family. In terms of assembly, interacts with RNA polymerase II and the DRB sensitivity-inducing factor complex (DSIF complex), which is composed of SUPT5H and SUPT4H1 or SUPT4H2. Interacts with PAAF1. Interacts with histone H2B and H3. Interacts (via SH2 domain) with POLR2A phosphorylated at 'Ser-2'. Interacts (via SH2 domain) with SETD1A. Interacts with IWS1, KDM6A and AICDA. Interacts with WDR43. Dephosphorylated at Ser-1530 by the PNUTS-PP1 complex during RNA polymerase II transcription pause-release. Ubiquitously expressed.

Its subcellular location is the nucleus. Its function is as follows. Histone H3-H4 chaperone that plays a key role in the regulation of transcription elongation and mRNA processing. Enhances the transcription elongation by RNA polymerase II (RNAPII) and is also required for the efficient activation of transcriptional elongation by the HIV-1 nuclear transcriptional activator, Tat. Besides chaperoning histones in transcription, acts to transport and splice mRNA by forming a complex with IWS1 and the C-terminal domain (CTD) of the RNAPII subunit RPB1 (POLR2A). The SUPT6H:IWS1:CTD complex recruits mRNA export factors (ALYREF/THOC4, EXOSC10) as well as histone modifying enzymes (such as SETD2), to ensure proper mRNA splicing, efficient mRNA export and elongation-coupled H3K36 methylation, a signature chromatin mark of active transcription. SUPT6H via its association with SETD1A, regulates both class-switch recombination and somatic hypermutation through formation of H3K4me3 epigenetic marks on activation-induced cytidine deaminase (AICDA) target loci. Promotes the activation of the myogenic gene program by entailing erasure of the repressive H3K27me3 epigenetic mark through stabilization of the chromatin interaction of the H3K27 demethylase KDM6A. This is Transcription elongation factor SPT6 (Supt6h) from Mus musculus (Mouse).